The primary structure comprises 883 residues: Protein P (883 aa).

A terminal protein domain (TP) region spans residues 1–183 (MHPFSRLFRN…GKPYSWEHRQ (183 aa)). A spacer region spans residues 184 to 386 (LVQHNGQQHK…YCIHHIVSSL (203 aa)). The segment at 298–344 (RNSGHTTWFSSASNSNKSRSREKAYSSNSTSKRYSPPLNYEKSDFSS) is disordered. Positions 387–728 (DDWGPCTVTG…YEELWPVVRQ (342 aa)) are polymerase/reverse transcriptase domain (RT). A Reverse transcriptase domain is found at 397-638 (DVTIKSPRTP…NHLHFMGYVI (242 aa)). The Mg(2+) site is built by Asp-469, Asp-589, and Asp-590.

This sequence belongs to the hepadnaviridae P protein family.

The catalysed reaction is DNA(n) + a 2'-deoxyribonucleoside 5'-triphosphate = DNA(n+1) + diphosphate. The enzyme catalyses Endonucleolytic cleavage to 5'-phosphomonoester.. With respect to regulation, activated by host HSP70 and HSP40 in vitro to be able to bind the epsilon loop of the pgRNA. Because deletion of the RNase H region renders the protein partly chaperone-independent, the chaperones may be needed indirectly to relieve occlusion of the RNA-binding site by this domain. Inhibited by several reverse-transcriptase inhibitors: Lamivudine, Adefovir and Entecavir. Multifunctional enzyme that converts the viral RNA genome into dsDNA in viral cytoplasmic capsids. This enzyme displays a DNA polymerase activity that can copy either DNA or RNA templates, and a ribonuclease H (RNase H) activity that cleaves the RNA strand of RNA-DNA heteroduplexes in a partially processive 3'- to 5'-endonucleasic mode. Neo-synthesized pregenomic RNA (pgRNA) are encapsidated together with the P protein, and reverse-transcribed inside the nucleocapsid. Initiation of reverse-transcription occurs first by binding the epsilon loop on the pgRNA genome, and is initiated by protein priming, thereby the 5'-end of (-)DNA is covalently linked to P protein. Partial (+)DNA is synthesized from the (-)DNA template and generates the relaxed circular DNA (RC-DNA) genome. After budding and infection, the RC-DNA migrates in the nucleus, and is converted into a plasmid-like covalently closed circular DNA (cccDNA). The activity of P protein does not seem to be necessary for cccDNA generation, and is presumably released from (+)DNA by host nuclear DNA repair machinery. This Woodchuck hepatitis B virus (isolate 2) (WHV) protein is Protein P.